The following is a 439-amino-acid chain: tRNA modification GTPase MnmE (439 aa).

(6S)-5-formyl-5,6,7,8-tetrahydrofolate-binding residues include R24, E81, and K121. Residues 218–363 (GFKVVIAGAP…LRRLIGDIVE (146 aa)) enclose the TrmE-type G domain. A K(+)-binding site is contributed by N228. Residues 228–233 (NAGKSS), 247–253 (TEIAGTT), and 272–275 (DTAG) contribute to the GTP site. S232 is a Mg(2+) binding site. K(+)-binding residues include T247, I249, and T252. T253 is a Mg(2+) binding site. Position 439 (K439) interacts with (6S)-5-formyl-5,6,7,8-tetrahydrofolate.

This sequence belongs to the TRAFAC class TrmE-Era-EngA-EngB-Septin-like GTPase superfamily. TrmE GTPase family. Homodimer. Heterotetramer of two MnmE and two MnmG subunits. Requires K(+) as cofactor.

It is found in the cytoplasm. Functionally, exhibits a very high intrinsic GTPase hydrolysis rate. Involved in the addition of a carboxymethylaminomethyl (cmnm) group at the wobble position (U34) of certain tRNAs, forming tRNA-cmnm(5)s(2)U34. This chain is tRNA modification GTPase MnmE, found in Rhizobium johnstonii (strain DSM 114642 / LMG 32736 / 3841) (Rhizobium leguminosarum bv. viciae).